The chain runs to 317 residues: Melanocyte-stimulating hormone receptor (317 aa).

The Extracellular segment spans residues 1–37 (MPVQGSQRRLLGSLNSTPTATPHLGLAANQTGARCLE). N29 carries N-linked (GlcNAc...) asparagine glycosylation. Residues 38-63 (VSVPDGLFLSLGLVSLVENVLVVTAI) traverse the membrane as a helical segment. Residues 64–72 (AKNRNLHSP) are Cytoplasmic-facing. Residues 73 to 93 (MYCFICCLALSDLLVSGSNML) traverse the membrane as a helical segment. Topologically, residues 94 to 118 (ETAVTLLLEAGVLAARAAVVQQLDN) are extracellular. The chain crosses the membrane as a helical span at residues 119–140 (VIDVITCSSMLSSLCFLGAIAV). Over 141–163 (DRYISIFYALRYHSIVTLPRARR) the chain is Cytoplasmic. The helical transmembrane segment at 164–183 (AVAAIWVASVLFSTLFIAYY) threads the bilayer. Over 184 to 191 (DHAAVLLC) the chain is Extracellular. A helical membrane pass occupies residues 192-211 (LVIFFLAMLVLMAVLYVHML). Over 212 to 240 (ARACQHAQGIARLHKRQRLAHQGFGLKGA) the chain is Cytoplasmic. Residues 241–266 (ATLTILLGIFFLCWGPFFLHLTLIVL) traverse the membrane as a helical segment. Topologically, residues 267 to 279 (CPQHPTCSCIFKN) are extracellular. The chain crosses the membrane as a helical span at residues 280–300 (FNLFLALIICNAIIDPLIYAF). Residues 301 to 317 (RSQELRRTLKEVLLCSW) lie on the Cytoplasmic side of the membrane. C315 carries the S-palmitoyl cysteine lipid modification.

The protein belongs to the G-protein coupled receptor 1 family. In terms of assembly, interacts with MGRN1, but does not undergo MGRN1-mediated ubiquitination; this interaction competes with GNAS-binding and thus inhibits agonist-induced cAMP production. Interacts with OPN3; the interaction results in a decrease in MC1R-mediated cAMP signaling and ultimately a decrease in melanin production in melanocytes.

It localises to the cell membrane. Its function is as follows. Receptor for MSH (alpha, beta and gamma) and ACTH. The activity of this receptor is mediated by G proteins which activate adenylate cyclase. Mediates melanogenesis, the production of eumelanin (black/brown) and phaeomelanin (red/yellow), via regulation of cAMP signaling in melanocytes. The chain is Melanocyte-stimulating hormone receptor (MC1R) from Papio anubis (Olive baboon).